Reading from the N-terminus, the 1014-residue chain is Regulator of telomere elongation helicase 1 homolog (1014 aa).

The 302-residue stretch at 7–308 folds into the Helicase ATP-binding domain; the sequence is RGVDVDFPYD…NSADKQFDPE (302 aa). ATP is bound at residue 42–49; that stretch reads SPTGTGKT. Residues 70–85 show a composition bias toward gly residues; it reads GGGGGGGGGGGGGGGS. The interval 70 to 106 is disordered; it reads GGGGGGGGGGGGGGGSQQPPYGSQPSGSQHSGGSASQ. The segment covering 86-106 has biased composition (low complexity); it reads QQPPYGSQPSGSQHSGGSASQ. Positions 149, 170, 175, and 211 each coordinate [4Fe-4S] cluster. A DEAH box motif is present at residues 255–258; sequence DEAH. The tract at residues 906-930 is disordered; that stretch reads SSKKSNITHAPGNSGAIHEKSGGQE.

Belongs to the helicase family. RAD3/XPD subfamily.

It is found in the nucleus. It catalyses the reaction ATP + H2O = ADP + phosphate + H(+). Functionally, a probable ATP-dependent DNA helicase implicated in DNA replication, DNA repair and the maintenance of genomic stability. Acts as an anti-recombinase to counteract toxic recombination and limit crossover during meiosis. Regulates meiotic recombination and crossover homeostasis by physically dissociating strand invasion events and thereby promotes noncrossover repair by meiotic synthesis dependent strand annealing (SDSA) as well as disassembly of D loop recombination intermediates. This is Regulator of telomere elongation helicase 1 homolog from Oryza sativa subsp. japonica (Rice).